Consider the following 431-residue polypeptide: Trigger factor (431 aa).

The 86-residue stretch at glycine 158–leucine 243 folds into the PPIase FKBP-type domain.

It belongs to the FKBP-type PPIase family. Tig subfamily.

It is found in the cytoplasm. The catalysed reaction is [protein]-peptidylproline (omega=180) = [protein]-peptidylproline (omega=0). In terms of biological role, involved in protein export. Acts as a chaperone by maintaining the newly synthesized protein in an open conformation. Functions as a peptidyl-prolyl cis-trans isomerase. The protein is Trigger factor of Xylella fastidiosa (strain M23).